Reading from the N-terminus, the 37-residue chain is Diuretic hormone 1 (37 aa).

This sequence belongs to the sauvagine/corticotropin-releasing factor/urotensin I family.

Its subcellular location is the secreted. In terms of biological role, stimulates fluid secretion by the Malpighian tubules. Increases cyclic AMP production. This chain is Diuretic hormone 1, found in Tenebrio molitor (Yellow mealworm beetle).